A 202-amino-acid chain; its full sequence is MADDLDDLLDEVESKFCCNTSESKQTSRVMKHTDQKCDNLEERKLPRKQGRKRVENEIDIDAMLHEILDDDVDTPTSTHEPSPAKASSSAQTISKKCCPVFLGGSSVAHGIGTSVSERACNRLRCTYCDFSVITFDDHEWDSSCDYLFFRNNMPDYHKLKVHLRRRAGVRAYACQCSWISILTLSHLREQPQLKWVCGKHRA.

The interval 71–90 is disordered; the sequence is DVDTPTSTHEPSPAKASSSA. The segment covering 74-90 has biased composition (polar residues); sequence TPTSTHEPSPAKASSSA.

As to expression, ubiquitously expressed during early development and in adult tissues including the eye, brain, heart and kidney.

It localises to the cytoplasm. Its subcellular location is the photoreceptor inner segment. In terms of biological role, may be involved in photoreceptor outer segment disk morphogenesis. This chain is Cilia- and flagella-associated protein 418 (cfap418), found in Danio rerio (Zebrafish).